The sequence spans 33 residues: Nigrocin-1 (33 aa).

Cys-27 and Cys-33 form a disulfide bridge.

This sequence belongs to the frog skin active peptide (FSAP) family. Brevinin subfamily. In terms of tissue distribution, expressed by the skin dorsal glands.

It is found in the secreted. In terms of biological role, shows antibacterial activity against both Gram-positive and Gram-negative bacteria and against the fungus C.albicans. Has no hemolytic activity. The sequence is that of Nigrocin-1 from Pelophylax nigromaculatus (Black-spotted frog).